We begin with the raw amino-acid sequence, 523 residues long: UDP-glucuronosyltransferase 2B16 (523 aa).

The first 16 residues, 1–16 (LLLLLQLSCCFSSGSC), serve as a signal peptide directing secretion. Lysine 129 carries the post-translational modification N6-succinyllysine. Asparagine 309 carries an N-linked (GlcNAc...) asparagine glycan. A helical membrane pass occupies residues 487-503 (VIGFLLACLTITTYLVI).

The protein belongs to the UDP-glycosyltransferase family.

The protein localises to the microsome membrane. It localises to the endoplasmic reticulum membrane. The catalysed reaction is glucuronate acceptor + UDP-alpha-D-glucuronate = acceptor beta-D-glucuronoside + UDP + H(+). Its function is as follows. UDPGT is of major importance in the conjugation and subsequent elimination of potentially toxic xenobiotics and endogenous compounds. Acts on small phenolic agents such as 2-beta-naphthol and 4-methylumbelliferone as well as bulky phenolic compounds like 2-hydroxy- and 4-hydroxybiphenyl. In contrast to 2B13 it is active toward 4-hydroxyesterone. The polypeptide is UDP-glucuronosyltransferase 2B16 (UGT2B16) (Oryctolagus cuniculus (Rabbit)).